Reading from the N-terminus, the 626-residue chain is Phosphomethylpyrimidine synthase (626 aa).

The interval 1–22 is disordered; it reads MTKQEKAINLSESAQVDQQSVQ. Over residues 10-22 the composition is skewed to polar residues; it reads LSESAQVDQQSVQ. Residues Asn-232, Met-261, Tyr-290, His-326, 346 to 348, 387 to 390, and Glu-426 each bind substrate; these read SRG and DGLR. Position 430 (His-430) interacts with Zn(2+). Tyr-453 contributes to the substrate binding site. Residue His-494 coordinates Zn(2+). Positions 574, 577, and 582 each coordinate [4Fe-4S] cluster.

This sequence belongs to the ThiC family. In terms of assembly, homodimer. [4Fe-4S] cluster is required as a cofactor.

The enzyme catalyses 5-amino-1-(5-phospho-beta-D-ribosyl)imidazole + S-adenosyl-L-methionine = 4-amino-2-methyl-5-(phosphooxymethyl)pyrimidine + CO + 5'-deoxyadenosine + formate + L-methionine + 3 H(+). The protein operates within cofactor biosynthesis; thiamine diphosphate biosynthesis. Its function is as follows. Catalyzes the synthesis of the hydroxymethylpyrimidine phosphate (HMP-P) moiety of thiamine from aminoimidazole ribotide (AIR) in a radical S-adenosyl-L-methionine (SAM)-dependent reaction. This Pseudomonas putida (strain ATCC 700007 / DSM 6899 / JCM 31910 / BCRC 17059 / LMG 24140 / F1) protein is Phosphomethylpyrimidine synthase.